A 252-amino-acid chain; its full sequence is MITKRIIPCLDVKDGRVVKGVQFVELKDAGDPVELAEVYDHEGADELVFLDISASHEGRKTMVDVVERVAAKLAIPFTVGGGINRLDDMKTILRAGADKVSVNTAAVLRPELITEGADFFGSQCIVVAIDAKYDPEADLYYVYTHGGRKKTNLEAVSWAKEAVRRGAGEILLTSMDSDGEKNGFDCRLTKLVSEAVSVPVIASGGAGRADHMYDAFAEGRADAALAASIFHYKETSVKEVKAYLKERGVNVR.

Residues D11 and D130 contribute to the active site.

Belongs to the HisA/HisF family. In terms of assembly, heterodimer of HisH and HisF.

Its subcellular location is the cytoplasm. The enzyme catalyses 5-[(5-phospho-1-deoxy-D-ribulos-1-ylimino)methylamino]-1-(5-phospho-beta-D-ribosyl)imidazole-4-carboxamide + L-glutamine = D-erythro-1-(imidazol-4-yl)glycerol 3-phosphate + 5-amino-1-(5-phospho-beta-D-ribosyl)imidazole-4-carboxamide + L-glutamate + H(+). Its pathway is amino-acid biosynthesis; L-histidine biosynthesis; L-histidine from 5-phospho-alpha-D-ribose 1-diphosphate: step 5/9. IGPS catalyzes the conversion of PRFAR and glutamine to IGP, AICAR and glutamate. The HisF subunit catalyzes the cyclization activity that produces IGP and AICAR from PRFAR using the ammonia provided by the HisH subunit. The polypeptide is Imidazole glycerol phosphate synthase subunit HisF (Bacillus licheniformis (strain ATCC 14580 / DSM 13 / JCM 2505 / CCUG 7422 / NBRC 12200 / NCIMB 9375 / NCTC 10341 / NRRL NRS-1264 / Gibson 46)).